Reading from the N-terminus, the 209-residue chain is Thiamine-phosphate synthase (209 aa).

4-amino-2-methyl-5-(diphosphooxymethyl)pyrimidine is bound by residues Q36–K40 and N68. Mg(2+) is bound by residues D69 and D87. T106 serves as a coordination point for 4-amino-2-methyl-5-(diphosphooxymethyl)pyrimidine. Residue S133–T135 participates in 2-[(2R,5Z)-2-carboxy-4-methylthiazol-5(2H)-ylidene]ethyl phosphate binding. K136 lines the 4-amino-2-methyl-5-(diphosphooxymethyl)pyrimidine pocket. Residue G163 coordinates 2-[(2R,5Z)-2-carboxy-4-methylthiazol-5(2H)-ylidene]ethyl phosphate.

The protein belongs to the thiamine-phosphate synthase family. Mg(2+) serves as cofactor.

The enzyme catalyses 2-[(2R,5Z)-2-carboxy-4-methylthiazol-5(2H)-ylidene]ethyl phosphate + 4-amino-2-methyl-5-(diphosphooxymethyl)pyrimidine + 2 H(+) = thiamine phosphate + CO2 + diphosphate. It catalyses the reaction 2-(2-carboxy-4-methylthiazol-5-yl)ethyl phosphate + 4-amino-2-methyl-5-(diphosphooxymethyl)pyrimidine + 2 H(+) = thiamine phosphate + CO2 + diphosphate. The catalysed reaction is 4-methyl-5-(2-phosphooxyethyl)-thiazole + 4-amino-2-methyl-5-(diphosphooxymethyl)pyrimidine + H(+) = thiamine phosphate + diphosphate. It functions in the pathway cofactor biosynthesis; thiamine diphosphate biosynthesis; thiamine phosphate from 4-amino-2-methyl-5-diphosphomethylpyrimidine and 4-methyl-5-(2-phosphoethyl)-thiazole: step 1/1. Condenses 4-methyl-5-(beta-hydroxyethyl)thiazole monophosphate (THZ-P) and 2-methyl-4-amino-5-hydroxymethyl pyrimidine pyrophosphate (HMP-PP) to form thiamine monophosphate (TMP). This is Thiamine-phosphate synthase from Pseudomonas aeruginosa (strain UCBPP-PA14).